The following is a 454-amino-acid chain: Argininosuccinate synthase (454 aa).

ATP is bound by residues 17–25 and A43; that span reads AFSGGLDTS. Y99 contacts L-citrulline. The ATP site is built by G129 and T131. Positions 131, 135, and 136 each coordinate L-aspartate. Residue N135 participates in L-citrulline binding. D136 lines the ATP pocket. Residues R139 and S192 each contribute to the L-citrulline site. D194 provides a ligand contact to ATP. The L-citrulline site is built by T201, E203, and E280.

It belongs to the argininosuccinate synthase family. Type 2 subfamily. In terms of assembly, homotetramer.

It is found in the cytoplasm. It carries out the reaction L-citrulline + L-aspartate + ATP = 2-(N(omega)-L-arginino)succinate + AMP + diphosphate + H(+). The protein operates within amino-acid biosynthesis; L-arginine biosynthesis; L-arginine from L-ornithine and carbamoyl phosphate: step 2/3. This is Argininosuccinate synthase from Yersinia enterocolitica serotype O:8 / biotype 1B (strain NCTC 13174 / 8081).